Here is an 880-residue protein sequence, read N- to C-terminus: Probable potassium channel AKT5 (880 aa).

At 1–82 the chain is on the cytoplasmic side; sequence MGIEKRKKMV…PFDPRYRAWD (82 aa). Residues 83–103 form a helical membrane-spanning segment; sequence WFLVILVLYTAWASPFEFGFL. Residues 104 to 111 are Extracellular-facing; the sequence is QTPRAPLS. A helical membrane pass occupies residues 112-132; that stretch reads ILDNVVNGFFAVDIVLTFFVA. Residues 133-153 lie on the Cytoplasmic side of the membrane; sequence FLDKATYLLVDDPKRIAWRYT. Residues 154 to 174 form a helical membrane-spanning segment; that stretch reads STWLIFDVVSTVPYELFGSLL. At 175–182 the chain is on the extracellular side; it reads HNTIQGYG. A helical; Voltage-sensor membrane pass occupies residues 183 to 203; it reads IFSMLRLWRLHRVSKCFARLE. Topologically, residues 204–217 are cytoplasmic; that stretch reads KDRKYNYFWIRCTK. Residues 218 to 238 traverse the membrane as a helical segment; sequence LLLVSLFVVHCGACFCYSIAA. The Extracellular portion of the chain corresponds to 239 to 265; it reads HYPDPSMTFMALAEANWKQKSLLIRYV. Residues 266-285 constitute an intramembrane region (pore-forming); it reads TAMYWSITTFSTTGYGDIHG. Residues 286–291 are Extracellular-facing; it reads NNAEER. Residues 292-312 form a helical membrane-spanning segment; that stretch reads AFILFYMIFNLGLLAYIIGNM. Over 313 to 880 the chain is Cytoplasmic; it reads TNLVVHVTSR…GDFLLLLKVS (568 aa). A nucleoside 3',5'-cyclic phosphate is bound at residue 396–517; that stretch reads LFHGISNDLL…IMNNLLQHLK (122 aa). 5 ANK repeats span residues 541-570, 574-603, 607-636, 637-667, and 671-700; these read DLPL…NPNE, NGRT…DPNI, EGSV…TLSF, DTVG…DISL, and NGTT…DMDK. Residues 809–880 enclose the KHA domain; that stretch reads VGGVYPARVT…GDFLLLLKVS (72 aa).

Belongs to the potassium channel family. Plant (TC 1.A.1.4) subfamily. The potassium channel is probably composed of a homo- or heterotetrameric complex of pore-forming subunits. Predominantly expressed in flowers.

The protein localises to the membrane. Functionally, probable potassium channel. May interact with the cytoskeleton or with regulatory proteins. The polypeptide is Probable potassium channel AKT5 (AKT5) (Arabidopsis thaliana (Mouse-ear cress)).